The primary structure comprises 187 residues: ADP-ribosylation factor-like protein 9 (187 aa).

GTP is bound by residues 25 to 32 (GLDGAGKT), 69 to 73 (EIGGS), and 126 to 129 (NKQD).

Belongs to the small GTPase superfamily. Arf family.

This is ADP-ribosylation factor-like protein 9 (ARL9) from Homo sapiens (Human).